We begin with the raw amino-acid sequence, 314 residues long: Cytochrome f (314 aa).

The N-terminal stretch at 1 to 30 is a signal peptide; that stretch reads MATNKFFKSLLFALTIAINSFGFCIQDAVA. Residues Y31, C51, C54, and H55 each contribute to the heme site. The chain crosses the membrane as a helical span at residues 280–300; that stretch reads IYGYLAFCFSVLITQIMLVLK.

The protein belongs to the cytochrome f family. The 4 large subunits of the cytochrome b6-f complex are cytochrome b6, subunit IV (17 kDa polypeptide, petD), cytochrome f and the Rieske protein, while the 4 small subunits are PetG, PetL, PetM and PetN. The complex functions as a dimer. Heme serves as cofactor.

The protein localises to the plastid. It localises to the chloroplast thylakoid membrane. Functionally, component of the cytochrome b6-f complex, which mediates electron transfer between photosystem II (PSII) and photosystem I (PSI), cyclic electron flow around PSI, and state transitions. This chain is Cytochrome f, found in Phaeodactylum tricornutum (strain CCAP 1055/1).